The chain runs to 61 residues: Large ribosomal subunit protein uL30 (61 aa).

It belongs to the universal ribosomal protein uL30 family. Part of the 50S ribosomal subunit.

This is Large ribosomal subunit protein uL30 from Chlorobium phaeobacteroides (strain DSM 266 / SMG 266 / 2430).